We begin with the raw amino-acid sequence, 328 residues long: Nickel import system permease protein NikB (328 aa).

Transmembrane regions (helical) follow at residues L11–L31, L104–I124, V139–I159, I170–I190, I229–V249, and V279–L299. One can recognise an ABC transmembrane type-1 domain in the interval A100 to T297.

The protein belongs to the binding-protein-dependent transport system permease family. OppBC subfamily. As to quaternary structure, the complex is composed of two ATP-binding proteins (NikD and NikE), two transmembrane proteins (NikB and NikC) and a solute-binding protein (NikA).

The protein resides in the cell membrane. In terms of biological role, part of the ABC transporter complex NikABCDE (Opp2) involved in nickel import. Probably responsible for the translocation of the substrate across the membrane. The protein is Nickel import system permease protein NikB of Staphylococcus aureus (strain MRSA252).